A 403-amino-acid polypeptide reads, in one-letter code: Acetate kinase (403 aa).

Mg(2+) is bound at residue N7. K14 lines the ATP pocket. R90 is a substrate binding site. Catalysis depends on D147, which acts as the Proton donor/acceptor. ATP-binding positions include 207–211, 283–285, and 331–335; these read HIGNG, DMR, and GVGEN. E386 contacts Mg(2+).

It belongs to the acetokinase family. In terms of assembly, homodimer. Requires Mg(2+) as cofactor. The cofactor is Mn(2+).

It localises to the cytoplasm. The catalysed reaction is acetate + ATP = acetyl phosphate + ADP. Its pathway is metabolic intermediate biosynthesis; acetyl-CoA biosynthesis; acetyl-CoA from acetate: step 1/2. Catalyzes the formation of acetyl phosphate from acetate and ATP. Can also catalyze the reverse reaction. In Thermotoga petrophila (strain ATCC BAA-488 / DSM 13995 / JCM 10881 / RKU-1), this protein is Acetate kinase.